A 70-amino-acid chain; its full sequence is Large ribosomal subunit protein bL28 (70 aa).

It belongs to the bacterial ribosomal protein bL28 family.

The chain is Large ribosomal subunit protein bL28 from Thermosipho melanesiensis (strain DSM 12029 / CIP 104789 / BI429).